The chain runs to 90 residues: c-Myc-binding protein homolog (90 aa).

The protein belongs to the AMY1 family.

It localises to the nucleus. This chain is c-Myc-binding protein homolog (mycbp), found in Dictyostelium discoideum (Social amoeba).